Reading from the N-terminus, the 421-residue chain is Medium-chain specific acyl-CoA dehydrogenase, mitochondrial (421 aa).

The N-terminal 25 residues, methionine 1–threonine 25, are a transit peptide targeting the mitochondrion. The residue at position 69 (lysine 69) is an N6-acetyllysine; alternate. Position 69 is an N6-succinyllysine; alternate (lysine 69). Tyrosine 158–serine 167 contacts FAD. Serine 167 contacts octanoyl-CoA. N6-succinyllysine is present on lysine 179. Tryptophan 191–threonine 193 is a binding site for FAD. Lysine 212, lysine 217, lysine 259, and lysine 271 each carry N6-acetyllysine; alternate. An N6-succinyllysine; alternate mark is found at lysine 212, lysine 217, lysine 259, and lysine 271. Aspartate 278 lines the octanoyl-CoA pocket. Lysine 279 carries the post-translational modification N6-acetyllysine. Arginine 281 serves as a coordination point for octanoyl-CoA. Lysine 301 carries the post-translational modification N6-acetyllysine. FAD is bound by residues arginine 306–threonine 308 and histidine 316–glutamine 317. Threonine 351 carries the post-translational modification Phosphothreonine. Residues glutamine 374–glycine 378 and glutamate 401–glutamine 405 each bind FAD. Octanoyl-CoA is bound at residue glutamate 401. Glutamate 401 acts as the Proton acceptor in catalysis.

This sequence belongs to the acyl-CoA dehydrogenase family. Homotetramer. Interacts with the heterodimeric electron transfer flavoprotein ETF. It depends on FAD as a cofactor. Post-translationally, acetylated. Could occur at proximity of the cofactor-binding sites and reduce the catalytic activity. Could be deacetylated by SIRT3.

The protein resides in the mitochondrion matrix. The enzyme catalyses a medium-chain 2,3-saturated fatty acyl-CoA + oxidized [electron-transfer flavoprotein] + H(+) = a medium-chain (2E)-enoyl-CoA + reduced [electron-transfer flavoprotein]. The catalysed reaction is pentanoyl-CoA + oxidized [electron-transfer flavoprotein] + H(+) = (2E)-pentenoyl-CoA + reduced [electron-transfer flavoprotein]. It catalyses the reaction hexanoyl-CoA + oxidized [electron-transfer flavoprotein] + H(+) = (2E)-hexenoyl-CoA + reduced [electron-transfer flavoprotein]. It carries out the reaction octanoyl-CoA + oxidized [electron-transfer flavoprotein] + H(+) = (2E)-octenoyl-CoA + reduced [electron-transfer flavoprotein]. The enzyme catalyses decanoyl-CoA + oxidized [electron-transfer flavoprotein] + H(+) = (2E)-decenoyl-CoA + reduced [electron-transfer flavoprotein]. The catalysed reaction is dodecanoyl-CoA + oxidized [electron-transfer flavoprotein] + H(+) = (2E)-dodecenoyl-CoA + reduced [electron-transfer flavoprotein]. It catalyses the reaction tetradecanoyl-CoA + oxidized [electron-transfer flavoprotein] + H(+) = (2E)-tetradecenoyl-CoA + reduced [electron-transfer flavoprotein]. It carries out the reaction oxidized [electron-transfer flavoprotein] + hexadecanoyl-CoA + H(+) = (2E)-hexadecenoyl-CoA + reduced [electron-transfer flavoprotein]. The protein operates within lipid metabolism; mitochondrial fatty acid beta-oxidation. In terms of biological role, medium-chain specific acyl-CoA dehydrogenase is one of the acyl-CoA dehydrogenases that catalyze the first step of mitochondrial fatty acid beta-oxidation, an aerobic process breaking down fatty acids into acetyl-CoA and allowing the production of energy from fats. The first step of fatty acid beta-oxidation consists in the removal of one hydrogen from C-2 and C-3 of the straight-chain fatty acyl-CoA thioester, resulting in the formation of trans-2-enoyl-CoA. Electron transfer flavoprotein (ETF) is the electron acceptor that transfers electrons to the main mitochondrial respiratory chain via ETF-ubiquinone oxidoreductase (ETF dehydrogenase). Among the different mitochondrial acyl-CoA dehydrogenases, medium-chain specific acyl-CoA dehydrogenase acts specifically on acyl-CoAs with saturated 6 to 12 carbons long primary chains. The sequence is that of Medium-chain specific acyl-CoA dehydrogenase, mitochondrial from Homo sapiens (Human).